A 225-amino-acid polypeptide reads, in one-letter code: Ribonuclease 3 (225 aa).

The 123-residue stretch at 7–129 (IPRLCRTLGY…IIGAIYLDSE (123 aa)) folds into the RNase III domain. E42 lines the Mg(2+) pocket. D46 is a catalytic residue. Residues D115 and E118 each contribute to the Mg(2+) site. E118 is a catalytic residue. In terms of domain architecture, DRBM spans 155–225 (DPKTLLQEHL…AAQVLELMKK (71 aa)).

This sequence belongs to the ribonuclease III family. As to quaternary structure, homodimer. The cofactor is Mg(2+).

It is found in the cytoplasm. The enzyme catalyses Endonucleolytic cleavage to 5'-phosphomonoester.. Digests double-stranded RNA. Involved in the processing of primary rRNA transcript to yield the immediate precursors to the large and small rRNAs (23S and 16S). Processes some mRNAs, and tRNAs when they are encoded in the rRNA operon. Processes pre-crRNA and tracrRNA of type II CRISPR loci if present in the organism. The polypeptide is Ribonuclease 3 (Shewanella halifaxensis (strain HAW-EB4)).